Reading from the N-terminus, the 292-residue chain is ATP synthase gamma chain (292 aa).

The protein belongs to the ATPase gamma chain family. F-type ATPases have 2 components, CF(1) - the catalytic core - and CF(0) - the membrane proton channel. CF(1) has five subunits: alpha(3), beta(3), gamma(1), delta(1), epsilon(1). CF(0) has three main subunits: a, b and c.

Its subcellular location is the cell inner membrane. Produces ATP from ADP in the presence of a proton gradient across the membrane. The gamma chain is believed to be important in regulating ATPase activity and the flow of protons through the CF(0) complex. The sequence is that of ATP synthase gamma chain from Hydrogenobaculum sp. (strain Y04AAS1).